The sequence spans 1342 residues: DNA-directed RNA polymerase subunit beta (1342 aa).

The protein belongs to the RNA polymerase beta chain family. The RNAP catalytic core consists of 2 alpha, 1 beta, 1 beta' and 1 omega subunit. When a sigma factor is associated with the core the holoenzyme is formed, which can initiate transcription.

It carries out the reaction RNA(n) + a ribonucleoside 5'-triphosphate = RNA(n+1) + diphosphate. In terms of biological role, DNA-dependent RNA polymerase catalyzes the transcription of DNA into RNA using the four ribonucleoside triphosphates as substrates. In Sodalis glossinidius (strain morsitans), this protein is DNA-directed RNA polymerase subunit beta.